A 95-amino-acid chain; its full sequence is Large ribosomal subunit protein uL23cz/uL23cy (95 aa).

The protein belongs to the universal ribosomal protein uL23 family. Part of the 50S ribosomal subunit.

The protein localises to the plastid. It is found in the chloroplast. Its function is as follows. Binds to 23S rRNA. In Amborella trichopoda, this protein is Large ribosomal subunit protein uL23cz/uL23cy (rpl23-A).